Here is a 67-residue protein sequence, read N- to C-terminus: Large ribosomal subunit protein bL35 (67 aa).

This sequence belongs to the bacterial ribosomal protein bL35 family.

This chain is Large ribosomal subunit protein bL35, found in Zymomonas mobilis subsp. mobilis (strain ATCC 31821 / ZM4 / CP4).